Consider the following 357-residue polypeptide: Protein Wnt-5b (357 aa).

The signal sequence occupies residues 1-18 (MPGIRLLLAAALLCCPPP). C81 and C92 form a disulfide bridge. 2 N-linked (GlcNAc...) asparagine glycosylation sites follow: N91 and N97. Disulfide bonds link C131/C139, C141/C159, C215/C229, C217/C224, C286/C317, C302/C312, C316/C356, C332/C347, C334/C344, and C339/C340. S221 carries the O-palmitoleoyl serine; by PORCN lipid modification. N-linked (GlcNAc...) asparagine glycosylation is found at N289 and N303.

The protein belongs to the Wnt family. In terms of processing, palmitoleoylation is required for efficient binding to frizzled receptors. Depalmitoleoylation leads to Wnt signaling pathway inhibition. As to expression, predominantly in neuroectodermal tissues.

It localises to the secreted. It is found in the extracellular space. Its subcellular location is the extracellular matrix. Ligand for members of the frizzled family of seven transmembrane receptors. Probable developmental protein. May be a signaling molecule which affects the development of discrete regions of tissues. Is likely to signal over only few cell diameters. This chain is Protein Wnt-5b (WNT-5B), found in Ambystoma mexicanum (Axolotl).